A 55-amino-acid polypeptide reads, in one-letter code: Protein CADMIUM TOLERANCE 2 (55 aa).

The chain crosses the membrane as a helical span at residues 24-40 (GCLYACIFTALCCFCCY).

This sequence belongs to the CYSTM1 family. In terms of tissue distribution, expressed only in roots.

It is found in the cell membrane. The protein resides in the secreted. Its subcellular location is the cell wall. Confers resistance to heavy metal ions (e.g. cadmium (CdCl(2)) and copper (CuCl(2))) by chelating them at the plasma membrane of root cells, thus stopping their entry and reducing their accumulation. This Oryza sativa subsp. japonica (Rice) protein is Protein CADMIUM TOLERANCE 2.